The sequence spans 1178 residues: DNA-directed RNA polymerase I subunit 2 (1178 aa).

The C4-type zinc-finger motif lies at 1097–1137; the sequence is CSLCGSLLTSSVVNVQQKKLIQEIGKLPPGRTPKKVTCYSC.

It belongs to the RNA polymerase beta chain family. Component of the RNA polymerase I (Pol I) complex consisting of at least 13 subunits.

Its subcellular location is the nucleus. It carries out the reaction RNA(n) + a ribonucleoside 5'-triphosphate = RNA(n+1) + diphosphate. Its function is as follows. DNA-dependent RNA polymerase catalyzes the transcription of DNA into RNA using the four ribonucleoside triphosphates as substrates. Second largest core component of RNA polymerase I which synthesizes ribosomal RNA precursors. Proposed to contribute to the polymerase catalytic activity and forms the polymerase active center together with the largest subunit. Pol I is composed of mobile elements and NRPA2 is part of the core element with the central large cleft and probably a clamp element that moves to open and close the cleft. Essential for the completion of the three rounds of mitosis in female megaspores required for the development of mature gametophytes. In Arabidopsis thaliana (Mouse-ear cress), this protein is DNA-directed RNA polymerase I subunit 2.